The sequence spans 479 residues: F-box/LRR-repeat protein 16 (479 aa).

Residues 1-92 are disordered; it reads MSSPGIDGDP…GPVSGPPVER (92 aa). Positions 47–60 are enriched in pro residues; the sequence is CQPPPPPTLPPPSL. Residue arginine 92 is modified to Omega-N-methylarginine. The F-box domain maps to 94-139; the sequence is PLATDEKILNGLFWYFSACEKCILAQVCKAWRRVLYQPKFWAGLTP. LRR repeat units lie at residues 321–342, 347–369, 373–394, 398–419, 423–444, and 446–470; these read NLTSLSLSGCSKVTDDGVELVA, KLRSLDLSWCPRITDMALEYVAC, RLEELVLDRCVRITDTGLSYLS, SLRSLYLRWCCQVQDFGLKHLL, NLRLLSLAGCPLLTTTGLSGLV, and LQELEELELTNCPGATPELFKYFSQ.

Interacts with SKP1 and CUL1.

Functionally, substrate-recognition component of the SCF (SKP1-CUL1-F-box protein)-type E3 ubiquitin ligase complex. The sequence is that of F-box/LRR-repeat protein 16 (Fbxl16) from Mus musculus (Mouse).